Reading from the N-terminus, the 520-residue chain is NAD(P)H-quinone oxidoreductase subunit 2 (520 aa).

Helical transmembrane passes span 15-35, 42-62, 79-99, 106-126, 132-152, 167-187, 210-230, 244-264, 280-300, 306-326, 334-354, 378-398, 400-420, and 466-486; these read ILPE…DLIL, WIGY…YFQW, LSII…LMSI, GTAL…GMFV, LVMI…LTGY, LLIG…LYGL, LGAV…ISAA, PTPV…ALAI, FVFT…ALAQ, MLAY…IAGT, IFYL…IILF, LGLS…GFFG, IYLF…LGLV, and VGLV…NPLF.

This sequence belongs to the complex I subunit 2 family. In terms of assembly, NDH-1 can be composed of about 15 different subunits; different subcomplexes with different compositions have been identified which probably have different functions.

It localises to the cellular thylakoid membrane. It carries out the reaction a plastoquinone + NADH + (n+1) H(+)(in) = a plastoquinol + NAD(+) + n H(+)(out). It catalyses the reaction a plastoquinone + NADPH + (n+1) H(+)(in) = a plastoquinol + NADP(+) + n H(+)(out). Functionally, NDH-1 shuttles electrons from an unknown electron donor, via FMN and iron-sulfur (Fe-S) centers, to quinones in the respiratory and/or the photosynthetic chain. The immediate electron acceptor for the enzyme in this species is believed to be plastoquinone. Couples the redox reaction to proton translocation, and thus conserves the redox energy in a proton gradient. Cyanobacterial NDH-1 also plays a role in inorganic carbon-concentration. The polypeptide is NAD(P)H-quinone oxidoreductase subunit 2 (Nostoc sp. (strain PCC 7120 / SAG 25.82 / UTEX 2576)).